Here is a 253-residue protein sequence, read N- to C-terminus: 3-dehydroquinate dehydratase (253 aa).

Residues 46–48 (EWR) and Arg82 each bind 3-dehydroquinate. Residue His143 is the Proton donor/acceptor of the active site. Lys170 acts as the Schiff-base intermediate with substrate in catalysis. Residues Arg213, Ser232, and Gln236 each contribute to the 3-dehydroquinate site.

Belongs to the type-I 3-dehydroquinase family. In terms of assembly, homodimer.

The enzyme catalyses 3-dehydroquinate = 3-dehydroshikimate + H2O. The protein operates within metabolic intermediate biosynthesis; chorismate biosynthesis; chorismate from D-erythrose 4-phosphate and phosphoenolpyruvate: step 3/7. Functionally, involved in the third step of the chorismate pathway, which leads to the biosynthesis of aromatic amino acids. Catalyzes the cis-dehydration of 3-dehydroquinate (DHQ) and introduces the first double bond of the aromatic ring to yield 3-dehydroshikimate. In Bacillus velezensis (strain DSM 23117 / BGSC 10A6 / LMG 26770 / FZB42) (Bacillus amyloliquefaciens subsp. plantarum), this protein is 3-dehydroquinate dehydratase.